Here is a 23-residue protein sequence, read N- to C-terminus: Alpha-conotoxin-like RgIB (23 aa).

2 cysteine pairs are disulfide-bonded: C5/C11 and C6/C19. Residues 7-9 form a lacks the Ser-Xaa-Pro motif that is crucial for potent interaction with nAChR region; the sequence is KNP.

Expressed by venom duct.

Its subcellular location is the secreted. Its function is as follows. Alpha-conotoxins act on postsynaptic membranes, they bind to the nicotinic acetylcholine receptors (nAChR) and thus inhibit them. Is a specific blocker of the alpha-3-beta-4/CHRNA3-CHRNB4 image nAChR and may also block alpha-3-beta-4-alpha-5 (CHRNA3-CHRNB4-CHRNA5) channels. Has possibly a distinct nAChR binding mode from other alpha-conotoxins, due to a different three residue motif (lacks the Ser-Xaa-Pro motif). In vivo, causes hyperactivity and behavioral disorders in mice following intracranial injection. The chain is Alpha-conotoxin-like RgIB from Conus regius (Crown cone).